A 180-amino-acid chain; its full sequence is ATP-dependent protease subunit HslV (180 aa).

The active site involves T5. The Na(+) site is built by G161, C164, and T167.

It belongs to the peptidase T1B family. HslV subfamily. As to quaternary structure, a double ring-shaped homohexamer of HslV is capped on each side by a ring-shaped HslU homohexamer. The assembly of the HslU/HslV complex is dependent on binding of ATP.

Its subcellular location is the cytoplasm. The enzyme catalyses ATP-dependent cleavage of peptide bonds with broad specificity.. Its activity is regulated as follows. Allosterically activated by HslU binding. Its function is as follows. Protease subunit of a proteasome-like degradation complex believed to be a general protein degrading machinery. The polypeptide is ATP-dependent protease subunit HslV (Campylobacter jejuni subsp. doylei (strain ATCC BAA-1458 / RM4099 / 269.97)).